A 243-amino-acid polypeptide reads, in one-letter code: DNA repair protein RecO (243 aa).

Belongs to the RecO family.

Functionally, involved in DNA repair and RecF pathway recombination. The chain is DNA repair protein RecO from Bartonella quintana (strain Toulouse) (Rochalimaea quintana).